Here is a 181-residue protein sequence, read N- to C-terminus: MTAPTLEEIKNCIKSIPDYPIPGIMFRDITSLIENGAAFSATINLLVERYKDQNISKVVGTEARGFIFGAPLAAAIGAGFVPVRKPGKLPRTTVHENYELEYGTDSLHIHSDAIKKNERVLLVDDLLATGGTAEASIKLIHRSGGIVIESAFVIELPALKGAQKLHALNVPYFSLIKFEGE.

This sequence belongs to the purine/pyrimidine phosphoribosyltransferase family. In terms of assembly, homodimer.

It localises to the cytoplasm. The enzyme catalyses AMP + diphosphate = 5-phospho-alpha-D-ribose 1-diphosphate + adenine. The protein operates within purine metabolism; AMP biosynthesis via salvage pathway; AMP from adenine: step 1/1. Functionally, catalyzes a salvage reaction resulting in the formation of AMP, that is energically less costly than de novo synthesis. This Psychromonas ingrahamii (strain DSM 17664 / CCUG 51855 / 37) protein is Adenine phosphoribosyltransferase.